Reading from the N-terminus, the 244-residue chain is Probable hydrolase R7 (244 aa).

The first 20 residues, Met1–Ala20, serve as a signal peptide directing secretion. Catalysis depends on charge relay system residues Asp192 and His224. A glycan (N-linked (GlcNAc...) asparagine) is linked at Asn227.

This sequence belongs to the AB hydrolase superfamily.

It functions in the pathway secondary metabolite biosynthesis. Probable hydrolase; part of the gene cluster that mediates the biosynthesis of squalestatin S1 (SQS1, also known as zaragozic acid A), a lead compound for the treatment of hyper-cholesterolemia by targeting squalene synthase (SS). Both phenylalanine and benzoic acid are known precursors of SQS1 and so it is unsurprising that the cluster also contains genes potentially involved in benzoate production such as phenyl-alanine ammonia lysase (PAL) M7, which catalyzes the first step in the degradation of phenylalanine, or the NADP-dependent dehydrogenase M3. The cluster contains two PKS encoding genes. The tetraketide synthase is responsible for the biosynthesis of the tetraketide sidechain of SQS1. The biosynthesis must involve 3 rounds of chain extension. After the first and second rounds methyl-transfer occurs, and in all rounds of extension the ketoreductase and dehydratase areactive. The enoyl reductase and C-MeT are not active in the final round of extension. The other PKS is therefore likely to encode squalestatin hexaketide synthase (SQHKS). The hexaketide main chain is initiated by benzoate which is an unusual starter unit for a highly reducing polyketide synthase. The cluster also contains a gene encoding a citrate synthase-like protein R3 presumably involved in linking the hexaketide to the oxaloacetate moiety. Formation of the tetraketide CoA may be catalyzed by the M9 CoA ligase, but the mechanism of release of the tetraketide and the hexaketide from their respective PKS remains unknown, although the cluster encodes a potential esterase (M8) and a possible hydrolase (M10) which could be involved in these processes. Two acyltransferases (AT), M4 and R4, are also encoded in the cluster. M4 is responsible for loading of the tetraketide sidechain from CoA onto the squalestatin core as the final step of biosynthesis. M4 appears to have a broad substrate selectivity for its acyl CoA substrate, allowing the in vitro synthesis of novel squalestatins. The biosynthesis of SQS1 requires several oxidative steps likely performed by oxidoreductases M1, R1 and R2. Finally, in support of the identification of the cluster as being responsible for SQS1 production, the cluster contains a gene encoding a putative squalene synthase (SS) R6, suggesting a likely mechanism for self-resistance. This is Probable hydrolase R7 from Phoma sp. (strain ATCC 20986 / MF5453).